The chain runs to 343 residues: Aspartate carbamoyltransferase catalytic subunit (343 aa).

Carbamoyl phosphate is bound by residues R91 and T92. An L-aspartate-binding site is contributed by K119. Positions 141, 171, and 174 each coordinate carbamoyl phosphate. Residues R204 and R259 each contribute to the L-aspartate site. The carbamoyl phosphate site is built by G300 and P301.

It belongs to the aspartate/ornithine carbamoyltransferase superfamily. ATCase family. As to quaternary structure, heterododecamer (2C3:3R2) of six catalytic PyrB chains organized as two trimers (C3), and six regulatory PyrI chains organized as three dimers (R2).

The catalysed reaction is carbamoyl phosphate + L-aspartate = N-carbamoyl-L-aspartate + phosphate + H(+). The protein operates within pyrimidine metabolism; UMP biosynthesis via de novo pathway; (S)-dihydroorotate from bicarbonate: step 2/3. In terms of biological role, catalyzes the condensation of carbamoyl phosphate and aspartate to form carbamoyl aspartate and inorganic phosphate, the committed step in the de novo pyrimidine nucleotide biosynthesis pathway. The chain is Aspartate carbamoyltransferase catalytic subunit from Burkholderia vietnamiensis (strain G4 / LMG 22486) (Burkholderia cepacia (strain R1808)).